Consider the following 372-residue polypeptide: Glutamate 5-kinase (372 aa).

Position 14 (lysine 14) interacts with ATP. 3 residues coordinate substrate: serine 54, aspartate 141, and asparagine 153. Residues 173–174 (TD) and 215–221 (TGGMSTK) contribute to the ATP site. Positions 280-358 (QGSLVLDAGA…DEIESVLGYD (79 aa)) constitute a PUA domain.

This sequence belongs to the glutamate 5-kinase family.

It is found in the cytoplasm. It catalyses the reaction L-glutamate + ATP = L-glutamyl 5-phosphate + ADP. It functions in the pathway amino-acid biosynthesis; L-proline biosynthesis; L-glutamate 5-semialdehyde from L-glutamate: step 1/2. Its function is as follows. Catalyzes the transfer of a phosphate group to glutamate to form L-glutamate 5-phosphate. The sequence is that of Glutamate 5-kinase from Shewanella oneidensis (strain ATCC 700550 / JCM 31522 / CIP 106686 / LMG 19005 / NCIMB 14063 / MR-1).